A 396-amino-acid polypeptide reads, in one-letter code: Anhydro-N-acetylmuramic acid kinase (396 aa).

21–28 (GTSADGID) is an ATP binding site.

It belongs to the anhydro-N-acetylmuramic acid kinase family.

It carries out the reaction 1,6-anhydro-N-acetyl-beta-muramate + ATP + H2O = N-acetyl-D-muramate 6-phosphate + ADP + H(+). It participates in amino-sugar metabolism; 1,6-anhydro-N-acetylmuramate degradation. The protein operates within cell wall biogenesis; peptidoglycan recycling. In terms of biological role, catalyzes the specific phosphorylation of 1,6-anhydro-N-acetylmuramic acid (anhMurNAc) with the simultaneous cleavage of the 1,6-anhydro ring, generating MurNAc-6-P. Is required for the utilization of anhMurNAc either imported from the medium or derived from its own cell wall murein, and thus plays a role in cell wall recycling. This is Anhydro-N-acetylmuramic acid kinase from Caldanaerobacter subterraneus subsp. tengcongensis (strain DSM 15242 / JCM 11007 / NBRC 100824 / MB4) (Thermoanaerobacter tengcongensis).